The sequence spans 613 residues: Pentatricopeptide repeat-containing protein At2g45350, chloroplastic (613 aa).

PPR repeat units follow at residues 85–119 (DPFLWNAVIKSHSHGKDPRQALLLLCLMLENGVSV), 120–154 (DKFSLSLVLKACSRLGFVKGGMQIHGFLKKTGLWS), 155–185 (DLFLQNCLIGLYLKCGCLGLSRQMFDRMPKR), 186–216 (DSVSYNSMIDGYVKCGLIVSARELFDLMPME), 219–250 (NLISWNSMISGYAQTSDGVDIASKLFADMPEK), 251–285 (DLISWNSMIDGYVKHGRIEDAKGLFDVMPRRDVVT), 286–312 (WATMIDGYAKLGFVHHAKTLFDQMPHR), 313–347 (DVVAYNSMMAGYVQNKYHMEALEIFSDMEKESHLL), 349–383 (DDTTLVIVLPAIAQLGRLSKAIDMHLYIVEKQFYL), 384–414 (GGKLGVALIDMYSKCGSIQHAMLVFEGIENK), 415–449 (SIDHWNAMIGGLAIHGLGESAFDMLLQIERLSLKP), 450–480 (DDITFVGVLNACSHSGLVKEGLLCFELMRRK), and 486–516 (RLQHYGCMVDILSRSGSIELAKNLIEEMPVE). The segment at 521–596 (IWRTFLTACS…IPGCSWIELD (76 aa)) is type E motif.

This sequence belongs to the PPR family. PCMP-E subfamily. In terms of assembly, interacts with DYW1.

It localises to the plastid. The protein resides in the chloroplast. Plays a major role in chloroplast RNA editing. Acts as a site-recognition transacting factor to recruit C-deaminase. Involved in single RNA editing events. Required for the edition of the site 1 of ndhD (ndhD-1 site corresponding to cytidine-2), which is a plastid-encoded subunit of the NADH-plastoquinone oxidoreductase. The interaction with DYW1 is required for its function in editing the ndhD-1 site. The protein is Pentatricopeptide repeat-containing protein At2g45350, chloroplastic (CRR4) of Arabidopsis thaliana (Mouse-ear cress).